Here is a 364-residue protein sequence, read N- to C-terminus: Phosphoserine aminotransferase (364 aa).

Arg42 lines the L-glutamate pocket. Pyridoxal 5'-phosphate contacts are provided by residues 76 to 77 (AS), Trp100, Thr150, Asp169, and Gln192. Position 193 is an N6-(pyridoxal phosphate)lysine (Lys193). Position 234–235 (234–235 (NT)) interacts with pyridoxal 5'-phosphate.

This sequence belongs to the class-V pyridoxal-phosphate-dependent aminotransferase family. SerC subfamily. As to quaternary structure, homodimer. It depends on pyridoxal 5'-phosphate as a cofactor.

The protein resides in the cytoplasm. It catalyses the reaction O-phospho-L-serine + 2-oxoglutarate = 3-phosphooxypyruvate + L-glutamate. The enzyme catalyses 4-(phosphooxy)-L-threonine + 2-oxoglutarate = (R)-3-hydroxy-2-oxo-4-phosphooxybutanoate + L-glutamate. Its pathway is amino-acid biosynthesis; L-serine biosynthesis; L-serine from 3-phospho-D-glycerate: step 2/3. Its function is as follows. Catalyzes the reversible conversion of 3-phosphohydroxypyruvate to phosphoserine and of 3-hydroxy-2-oxo-4-phosphonooxybutanoate to phosphohydroxythreonine. The polypeptide is Phosphoserine aminotransferase (Shouchella clausii (strain KSM-K16) (Alkalihalobacillus clausii)).